A 96-amino-acid polypeptide reads, in one-letter code: Large ribosomal subunit protein bL21 (96 aa).

This sequence belongs to the bacterial ribosomal protein bL21 family. Part of the 50S ribosomal subunit. Contacts protein L20.

Its function is as follows. This protein binds to 23S rRNA in the presence of protein L20. This is Large ribosomal subunit protein bL21 from Prosthecochloris aestuarii (strain DSM 271 / SK 413).